Consider the following 115-residue polypeptide: Large ribosomal subunit protein mL60 (115 aa).

The N-terminal 23 residues, 1–23 (MLGAFNSTLARFGGLVHKVPWRL), are a transit peptide targeting the mitochondrion. Positions 88-115 (AGLQGFRKGVHKSPKWTRSTNRVNPTGF) are disordered. Over residues 103–115 (WTRSTNRVNPTGF) the composition is skewed to polar residues.

The protein belongs to the mitochondrion-specific ribosomal protein mL60 family. As to quaternary structure, component of the mitochondrial large ribosomal subunit (mt-LSU). Mature yeast 74S mitochondrial ribosomes consist of a small (37S) and a large (54S) subunit. The 37S small subunit contains a 15S ribosomal RNA (15S mt-rRNA) and at least 32 different proteins. The 54S large subunit contains a 21S rRNA (21S mt-rRNA) and at least 45 different proteins.

It localises to the mitochondrion. Functionally, component of the mitochondrial ribosome (mitoribosome), a dedicated translation machinery responsible for the synthesis of mitochondrial genome-encoded proteins, including at least some of the essential transmembrane subunits of the mitochondrial respiratory chain. The mitoribosomes are attached to the mitochondrial inner membrane and translation products are cotranslationally integrated into the membrane. The sequence is that of Large ribosomal subunit protein mL60 (mrpl31) from Schizosaccharomyces pombe (strain 972 / ATCC 24843) (Fission yeast).